The following is a 438-amino-acid chain: GDP-mannose 6-dehydrogenase (438 aa).

The NAD(+) site is built by Y10, V11, D30, K35, T86, and T124. 10 residues coordinate GDP-alpha-D-mannuronate: E161, K210, N214, H217, N225, Y256, Y257, R259, F262, and G265. C268 is a catalytic residue. K271 contributes to the NAD(+) binding site. Residue K324 participates in GDP-alpha-D-mannuronate binding. R331 provides a ligand contact to NAD(+).

Belongs to the UDP-glucose/GDP-mannose dehydrogenase family.

The enzyme catalyses GDP-alpha-D-mannose + 2 NAD(+) + H2O = GDP-alpha-D-mannuronate + 2 NADH + 3 H(+). Its pathway is glycan biosynthesis; alginate biosynthesis. Its function is as follows. Catalyzes the oxidation of guanosine diphospho-D-mannose (GDP-D-mannose) to GDP-D-mannuronic acid, a precursor for alginate polymerization. The alginate layer causes a mucoid phenotype and provides a protective barrier against host immune defenses and antibiotics. This is GDP-mannose 6-dehydrogenase (algD) from Pseudomonas putida (strain ATCC 47054 / DSM 6125 / CFBP 8728 / NCIMB 11950 / KT2440).